The primary structure comprises 301 residues: Putative F-box/LRR-repeat protein 19 (301 aa).

The region spanning 18–66 is the F-box domain; that stretch reads PDWSELTRECLLDIFSRLSQEQRWIGPMLVSKNWMNACYDPTLNTIFDL. 5 LRR repeats span residues 108–133, 134–159, 160–185, 231–256, and 257–282; these read IRHC…WIKN, CPNV…DISY, SYGI…KRNL, YSTL…DLRG, and CISL…IKPD.

The protein is Putative F-box/LRR-repeat protein 19 (FBL19) of Arabidopsis thaliana (Mouse-ear cress).